The primary structure comprises 333 residues: EP300-interacting inhibitor of differentiation 3 (333 aa).

It belongs to the NSE4 family. Component of the SMC5-SMC6 complex which consists at least of SMC5, SMC6, NSMCE2, NSMCE1, NSMCE4A or EID3 and NSMCE3; EID3 seems to be a testis-specific subunit. NSMCE1, NSMCE4A or EID3 and NSMCE3 probably form a subcomplex that bridges the head domains of the SMC5:SMC6 heterodimer. Homodimer, and heterodimer with EID2. Interacts with the C-terminal region of CREBBP. As to expression, highly expressed in testis.

It localises to the nucleus. The protein resides in the cytoplasm. Its subcellular location is the chromosome. It is found in the telomere. Functionally, tissue-specific component of the SMC5-SMC6 complex, a complex involved in repair of DNA double-strand breaks by homologous recombination. The complex may promote sister chromatid homologous recombination by recruiting the SMC1-SMC3 cohesin complex to double-strand breaks. The complex is required for telomere maintenance via recombination and mediates sumoylation of shelterin complex (telosome) components. Its function is as follows. Acts as a repressor of nuclear receptor-dependent transcription possibly by interfering with CREBBP-dependent coactivation. May function as a coinhibitor of other CREBBP/EP300-dependent transcription factors. The sequence is that of EP300-interacting inhibitor of differentiation 3 from Homo sapiens (Human).